The following is a 148-amino-acid chain: DNA-directed RNA polymerase II subunit GRINL1A, isoforms 4/5 (148 aa).

The interval 1–66 (MATPARAPES…AEFGGAAGNV (66 aa)) is disordered. Residues 53 to 66 (GLGAAEFGGAAGNV) are compositionally biased toward low complexity.

The protein is DNA-directed RNA polymerase II subunit GRINL1A, isoforms 4/5 (POLR2M) of Homo sapiens (Human).